The chain runs to 387 residues: Patatin-13 (387 aa).

An N-terminal signal peptide occupies residues 1–23 (MATTKSVLVLIFMILATTSSTFA). Positions 32–230 (LSVDGGGIKG…TVADPALLSV (199 aa)) constitute a PNPLA domain. The GXGXXG signature appears at 36 to 41 (GGGIKG). The GXSXG signature appears at 75 to 79 (GTSTG). Catalysis depends on serine 77, which acts as the Nucleophile. N-linked (GlcNAc...) asparagine glycosylation is found at asparagine 115 and asparagine 203. Aspartate 216 functions as the Proton acceptor in the catalytic mechanism. Positions 216–218 (DGA) match the DGA/G motif. Residues 361-385 (ETYEEALKRFAKLLSDRKKLRANKA) are a coiled coil.

Belongs to the patatin family. In terms of tissue distribution, tuber.

It localises to the vacuole. Probable lipolytic acyl hydrolase (LAH), an activity which is thought to be involved in the response of tubers to pathogens. This is Patatin-13 from Solanum tuberosum (Potato).